Here is a 358-residue protein sequence, read N- to C-terminus: Putative spore germination protein YfkT (358 aa).

The next 10 helical transmembrane spans lie at 10–30 (LFFGALYTLAVGLKHAPILMI), 36–56 (NAWHSYILGVVIVIPALWLMH), 81–101 (IIILLFSLYFLLINAHDIRFF), 107–127 (ILFLPRTPMAVLGGVIIFVAI), 143–163 (IFLFPFGILVLFLPFTLATQI), 179–199 (LQSGYYAFGTMGELIILPLLF), 210–230 (IFAILLGALLLAVMLFSSISV), 262–282 (IIAAFWIPVIMVKIAGSLYIV), 297–317 (AMYTPTGMFSVVCGFWFFLNT), and 326–346 (IKPIINVVISLLLPLLIYLII).

This sequence belongs to the amino acid-polyamine-organocation (APC) superfamily. Spore germination protein (SGP) (TC 2.A.3.9) family.

Its subcellular location is the cell membrane. May be involved in spore germination. This Bacillus subtilis (strain 168) protein is Putative spore germination protein YfkT (yfkT).